The primary structure comprises 2564 residues: Highly reducing polyketide synthase 40 (2564 aa).

In terms of domain architecture, Ketosynthase family 3 (KS3) spans 8 to 432; that stretch reads PEPIAIIGMS…GTNAHVIVDR (425 aa). Catalysis depends on for beta-ketoacyl synthase activity residues cysteine 181, histidine 317, and histidine 358. Positions 435–482 are disordered; that stretch reads EHNHSNGTNGTNGTHHHNGTNGSNGNGTNGTNGTNGTDGFHDTESISD. Residues 439 to 455 show a composition bias toward low complexity; the sequence is SNGTNGTNGTHHHNGTN. Residues 473–482 show a composition bias toward basic and acidic residues; the sequence is GFHDTESISD. The tract at residues 580–914 is malonyl-CoA:ACP transacylase (MAT) domain; the sequence is YVFGGQGAQY…SAAENMLRTL (335 aa). Residues 973-1113 are N-terminal hotdog fold; the sequence is HELLGNLSAD…GRIRAVVDQG (141 aa). Residues 973–1280 form a dehydratase (DH) domain region; that stretch reads HELLGNLSAD…GLRTAQLPSD (308 aa). Residues 973 to 1283 enclose the PKS/mFAS DH domain; the sequence is HELLGNLSAD…TAQLPSDVVN (311 aa). The active-site Proton acceptor; for dehydratase activity is the histidine 1005. The C-terminal hotdog fold stretch occupies residues 1130–1283; that stretch reads AASVPHHITS…TAQLPSDVVN (154 aa). Aspartate 1199 serves as the catalytic Proton donor; for dehydratase activity. A methyltransferase (CMet) domain region spans residues 1451-1556; that stretch reads LEVGGGTASA…RQLLRPGGTL (106 aa). The tract at residues 1854–2167 is enoyl reductase (ER) domain; sequence GLLETFRWVD…AGKHMGKVIL (314 aa). The segment at 2191–2370 is ketoreductase (KR) domain; it reads ATYLLVGGFG…SFAIDVGVVS (180 aa). The Carrier domain occupies 2472 to 2549; that stretch reads EALDAVGQAV…ELIHLVAGKS (78 aa). An O-(pantetheine 4'-phosphoryl)serine modification is found at serine 2509.

It participates in secondary metabolite biosynthesis. Functionally, highly reducing polyketide synthase; part of the gene cluster that mediates the biosynthesis of the lipopeptides W493 A and B. W493 A and B consist of six amino acid residues D-allo-thr, L-Ala, D-Ala, L-Gln, D-Tyr, and L-Val/L-Ile linked to a 3-hydroxy-4-methyltetradecanoic acid polyketide chain. The biosynthesis starts with formation of the linear polyketide chain by the highly reducing polyketide synthase PKS40. The gene cluster contains a putative acyl-CoA ligase (FPSE_09184) for formation of a CoA thioester polyketide. The thiol bond could be hydrolyzed by the putative thioesterase (FPSE_09186) and then accepted by the first T domain in module 1 of NRPS32. The second T domain is responsible for accepting a threonine, which is adenylated by the A domain and epimerized to the D-allo-threonine formed by the E domain. The five successive modules incorporate Ala, Ala, Gln, Tyr, and Val/Ile into the final product, which is released by cyclization. The protein is Highly reducing polyketide synthase 40 of Fusarium pseudograminearum (strain CS3096) (Wheat and barley crown-rot fungus).